The primary structure comprises 698 residues: Long-chain-fatty-acid--CoA ligase 1 (698 aa).

M1 bears the N-acetylmethionine mark. Y9 bears the 3'-nitrotyrosine mark. A helical; Signal-anchor for type III membrane protein transmembrane segment spans residues 25-45 (LPTNTLMGFGAFAALTTFWYA). The Cytoplasmic portion of the chain corresponds to 46–698 (TRPKPLKPPC…IDDLYSTIKV (653 aa)). A Phosphotyrosine modification is found at Y84. The O-linked (GlcNAc) serine glycan is linked to S135. N6-acetyllysine is present on residues K207, K356, and K386. The residue at position 620 (S620) is a Phosphoserine. Position 632 is an N6-acetyllysine (K632).

Belongs to the ATP-dependent AMP-binding enzyme family. Requires Mg(2+) as cofactor. Highly expressed in liver, heart, skeletal muscle, kidney and erythroid cells, and to a lesser extent in brain, lung, placenta and pancreas.

It localises to the mitochondrion outer membrane. It is found in the peroxisome membrane. The protein resides in the microsome membrane. The protein localises to the endoplasmic reticulum membrane. The enzyme catalyses a long-chain fatty acid + ATP + CoA = a long-chain fatty acyl-CoA + AMP + diphosphate. It catalyses the reaction (5Z,8Z,11Z,14Z)-eicosatetraenoate + ATP + CoA = (5Z,8Z,11Z,14Z)-eicosatetraenoyl-CoA + AMP + diphosphate. It carries out the reaction 3,7,11,15-tetramethylhexadecanoate + ATP + CoA = phytanoyl-CoA + AMP + diphosphate. The catalysed reaction is hexadecanoate + ATP + CoA = hexadecanoyl-CoA + AMP + diphosphate. The enzyme catalyses (E)-hexadec-2-enoate + ATP + CoA = (2E)-hexadecenoyl-CoA + AMP + diphosphate. It catalyses the reaction 2,6,10,14-tetramethylpentadecanoate + ATP + CoA = pristanoyl-CoA + AMP + diphosphate. It carries out the reaction 14,15-epoxy-(5Z,8Z,11Z)-eicosatrienoate + ATP + CoA = 14,15-epoxy-(5Z,8Z,11Z)-eicosatrienoyl-CoA + AMP + diphosphate. The catalysed reaction is 5-hydroxy-(6E,8Z,11Z,14Z)-eicosatetraenoate + ATP + CoA = 5-hydroxy-(6E,8Z,11Z,14Z)-eicosatetraenoyl-CoA + AMP + diphosphate. The enzyme catalyses 12-hydroxy-(5Z,8Z,10E,14Z)-eicosatetraenoate + ATP + CoA = 12-hydroxy-(5Z,8Z,10E,14Z)-eicosatetraenoyl-CoA + AMP + diphosphate. It catalyses the reaction 15-hydroxy-(5Z,8Z,11Z,13E)-eicosatetraenoate + ATP + CoA = 15-hydroxy-(5Z,8Z,11Z,13E)-eicosatetraenoyl-CoA + AMP + diphosphate. It carries out the reaction (9Z)-octadecenoate + ATP + CoA = (9Z)-octadecenoyl-CoA + AMP + diphosphate. Inhibited at high temperature and by arachidonate. Catalyzes the conversion of long-chain fatty acids to their active form acyl-CoAs for both synthesis of cellular lipids, and degradation via beta-oxidation. Preferentially uses palmitoleate, oleate and linoleate. Preferentially activates arachidonate than epoxyeicosatrienoic acids (EETs) or hydroxyeicosatrienoic acids (HETEs). The sequence is that of Long-chain-fatty-acid--CoA ligase 1 from Homo sapiens (Human).